Here is a 79-residue protein sequence, read N- to C-terminus: MADAEHERIFKKFDTDGDGKISAAELEEALKKLGSVTPDDVTRMMAKIDTDGDGNISFQEFTEFASANPGLMKDVAKVF.

2 consecutive EF-hand domains span residues 1–36 (MADA…LGSV) and 39–71 (DDVT…NPGL). Positions 14, 16, 18, 20, 25, 49, 51, 53, 55, and 60 each coordinate Ca(2+).

The chain is Polcalcin Bra r 1 from Brassica campestris (Field mustard).